Reading from the N-terminus, the 47-residue chain is Large ribosomal subunit protein bL32c (47 aa).

Belongs to the bacterial ribosomal protein bL32 family.

The protein resides in the plastid. This is Large ribosomal subunit protein bL32c (rpl32) from Prototheca wickerhamii.